Here is a 62-residue protein sequence, read N- to C-terminus: UPF0434 protein FTM_0733 (62 aa).

It belongs to the UPF0434 family.

The chain is UPF0434 protein FTM_0733 from Francisella tularensis subsp. mediasiatica (strain FSC147).